The following is an 883-amino-acid chain: Valine--tRNA ligase (883 aa).

The 'HIGH' region signature appears at 52-62 (PNVTGRLHLGH). The short motif at 529-533 (KMSKS) is the 'KMSKS' region element. Residue K532 coordinates ATP. Residues 813–848 (LEGLIDFDKEIKRLENELAKWTKEVERVQKKLSNQG) are a coiled coil.

It belongs to the class-I aminoacyl-tRNA synthetase family. ValS type 1 subfamily. Monomer.

The protein localises to the cytoplasm. The catalysed reaction is tRNA(Val) + L-valine + ATP = L-valyl-tRNA(Val) + AMP + diphosphate. In terms of biological role, catalyzes the attachment of valine to tRNA(Val). As ValRS can inadvertently accommodate and process structurally similar amino acids such as threonine, to avoid such errors, it has a 'posttransfer' editing activity that hydrolyzes mischarged Thr-tRNA(Val) in a tRNA-dependent manner. The sequence is that of Valine--tRNA ligase from Oceanobacillus iheyensis (strain DSM 14371 / CIP 107618 / JCM 11309 / KCTC 3954 / HTE831).